A 502-amino-acid polypeptide reads, in one-letter code: Probable malate:quinone oxidoreductase (502 aa).

It belongs to the MQO family. Requires FAD as cofactor.

The catalysed reaction is (S)-malate + a quinone = a quinol + oxaloacetate. Its pathway is carbohydrate metabolism; tricarboxylic acid cycle; oxaloacetate from (S)-malate (quinone route): step 1/1. The protein is Probable malate:quinone oxidoreductase of Parasynechococcus marenigrum (strain WH8102).